We begin with the raw amino-acid sequence, 95 residues long: uncharacterized protein (95 aa).

This is an uncharacterized protein from Schizosaccharomyces pombe (strain 972 / ATCC 24843) (Fission yeast).